The sequence spans 469 residues: Glutamine synthetase (469 aa).

Residues 15–96 enclose the GS beta-grasp domain; sequence EDVKFVDVRF…INFFIHDPIT (82 aa). Residues 104 to 469 form the GS catalytic domain; it reads PRNVAKKAEA…PHEFEMYFDV (366 aa). Glutamate 129 and glutamate 131 together coordinate Mg(2+). Glutamate 205 contributes to the ATP binding site. Glutamate 210 and glutamate 218 together coordinate Mg(2+). 221 to 223 contacts ATP; it reads YKF. Residues 262–263 and glycine 263 contribute to the L-glutamate site; that span reads NG. Position 267 (histidine 267) interacts with Mg(2+). ATP-binding positions include 269–271 and serine 271; that span reads HQS. The L-glutamate site is built by arginine 320, glutamate 326, and arginine 338. ATP-binding residues include arginine 338, arginine 343, and lysine 352. Glutamate 357 provides a ligand contact to Mg(2+). L-glutamate is bound at residue arginine 359. Tyrosine 397 is subject to O-AMP-tyrosine.

Belongs to the glutamine synthetase family. As to quaternary structure, oligomer of 12 subunits arranged in the form of two hexagons. Mg(2+) is required as a cofactor.

Its subcellular location is the cytoplasm. It catalyses the reaction L-glutamate + NH4(+) + ATP = L-glutamine + ADP + phosphate + H(+). Its activity is regulated as follows. The activity of this enzyme could be controlled by adenylation under conditions of abundant glutamine. Catalyzes the ATP-dependent biosynthesis of glutamine from glutamate and ammonia. Complements L-glutamine auxotrophy of an E.coli glnA mutant. The chain is Glutamine synthetase from Streptomyces coelicolor (strain ATCC BAA-471 / A3(2) / M145).